A 105-amino-acid polypeptide reads, in one-letter code: Nucleoid-associated protein MXAN_1931 (105 aa).

This sequence belongs to the YbaB/EbfC family. Homodimer.

The protein resides in the cytoplasm. The protein localises to the nucleoid. Functionally, binds to DNA and alters its conformation. May be involved in regulation of gene expression, nucleoid organization and DNA protection. The sequence is that of Nucleoid-associated protein MXAN_1931 from Myxococcus xanthus (strain DK1622).